A 1242-amino-acid polypeptide reads, in one-letter code: DNA-directed RNA polymerase RPB2 homolog (1242 aa).

A C4-type zinc finger spans residues 1180–1201 (CRNCGEPAIYNASHPIYKCMNC).

This sequence belongs to the RNA polymerase beta chain family. In terms of assembly, part of the viral DNA-directed RNA polymerase that consists of 8 polII-like subunits (RPB1, RPB2, RPB3, RPB5, RPB6, RPB7, RPB9, RPB10), a capping enzyme and a termination factor.

It is found in the host cytoplasm. It localises to the virion. It catalyses the reaction RNA(n) + a ribonucleoside 5'-triphosphate = RNA(n+1) + diphosphate. In terms of biological role, catalytic component of the DNA-directed RNA polymerase (RNAP) that catalyzes the transcription in the cytoplasm of viral DNA into RNA using the four ribonucleoside triphosphates as substrates. Forms the polymerase active center together with RPB1. Part of the core element with the central large cleft, the clamp element that moves to open and close the cleft and the jaws that are thought to grab the incoming DNA template. The protein is DNA-directed RNA polymerase RPB2 homolog of African swine fever virus (isolate Pig/Kenya/KEN-50/1950) (ASFV).